Here is a 285-residue protein sequence, read N- to C-terminus: V-set and transmembrane domain-containing protein 2B (285 aa).

Positions 1 to 28 are cleaved as a signal peptide; it reads MEQRNRLGALGYLLPLLLHSLLLFVADA. An Ig-like V-type domain is found at 29-143; sequence TFTEVPKDVT…DDDTQEHKAQ (115 aa). Residues 29-263 are Extracellular-facing; it reads TFTEVPKDVT…HGSGTGPGYS (235 aa). Cysteines 49 and 127 form a disulfide. The interval 160 to 225 is disordered; the sequence is AEAVSHIQSS…AAAAAASATH (66 aa). Composition is skewed to low complexity over residues 176–189 and 208–225; these read ASSAVSSNNAGAAV and PAGSGVPEAAAAAASATH. The chain crosses the membrane as a helical span at residues 264 to 284; the sequence is ADPLLSLLLLALHKFLHPLLG. A topological domain (cytoplasmic) is located at residue H285.

It is found in the membrane. The chain is V-set and transmembrane domain-containing protein 2B (Vstm2b) from Mus musculus (Mouse).